The primary structure comprises 266 residues: Glutamate racemase (266 aa).

Substrate-binding positions include 9–10 and 41–42; these read DS and YG. The active-site Proton donor/acceptor is Cys-72. Residue 73 to 74 participates in substrate binding; sequence NT. The active-site Proton donor/acceptor is the Cys-184. 185–186 lines the substrate pocket; sequence TH.

Belongs to the aspartate/glutamate racemases family. Homodimer.

The catalysed reaction is L-glutamate = D-glutamate. It participates in cell wall biogenesis; peptidoglycan biosynthesis. In terms of biological role, provides the (R)-glutamate required for cell wall biosynthesis. This Staphylococcus aureus (strain MRSA252) protein is Glutamate racemase.